The sequence spans 227 residues: Cytidylate kinase (227 aa).

ATP is bound at residue 12-20 (GPSGAGKGT).

It belongs to the cytidylate kinase family. Type 1 subfamily.

The protein localises to the cytoplasm. The enzyme catalyses CMP + ATP = CDP + ADP. The catalysed reaction is dCMP + ATP = dCDP + ADP. The sequence is that of Cytidylate kinase from Salmonella arizonae (strain ATCC BAA-731 / CDC346-86 / RSK2980).